Here is a 622-residue protein sequence, read N- to C-terminus: Auxin response factor 11 (622 aa).

Residues 145 to 247 (FVKILTASDT…DLRVGVRRLA (103 aa)) constitute a DNA-binding region (TF-B3). Disordered stretches follow at residues 358–398 (SIQR…ISEI) and 483–513 (SNIS…TRSR). Composition is skewed to polar residues over residues 376–387 (SALTPTPTQQQS) and 483–511 (SNIS…TSTR). One can recognise a PB1 domain in the interval 511–594 (RSRIKVQMQG…KKLFIYPSDE (84 aa)).

It belongs to the ARF family. In terms of assembly, homodimers and heterodimers.

It is found in the nucleus. Functionally, auxin response factors (ARFs) are transcriptional factors that bind specifically to the DNA sequence 5'-TGTCTC-3' found in the auxin-responsive promoter elements (AuxREs). Could act as transcriptional activator or repressor. Formation of heterodimers with Aux/IAA proteins may alter their ability to modulate early auxin response genes expression. This Arabidopsis thaliana (Mouse-ear cress) protein is Auxin response factor 11 (ARF11).